Here is a 272-residue protein sequence, read N- to C-terminus: Regulatory protein RecX (272 aa).

The protein belongs to the RecX family.

It localises to the cytoplasm. Functionally, modulates RecA activity. This Staphylococcus saprophyticus subsp. saprophyticus (strain ATCC 15305 / DSM 20229 / NCIMB 8711 / NCTC 7292 / S-41) protein is Regulatory protein RecX.